The sequence spans 658 residues: Putative arrestin-related trafficking adapter C2D10.04 (658 aa).

Disordered regions lie at residues 21-107 (LHHQ…LTWS) and 638-658 (REEA…EIPR). A compositionally biased stretch (low complexity) spans 39 to 81 (NRSSNSGLNRRNSVFGLPSSGLSSRLSKPSLSSINNSNNSSSN). Over residues 96–107 (RNMSNKPPLTWS) the composition is skewed to polar residues. At S653 the chain carries Phosphoserine.

Belongs to the ALY1 family.

It is found in the cytoplasm. Its function is as follows. May regulate endocytosis in response to extracellular stimuli. The protein is Putative arrestin-related trafficking adapter C2D10.04 of Schizosaccharomyces pombe (strain 972 / ATCC 24843) (Fission yeast).